The primary structure comprises 521 residues: Ribonuclease Y (521 aa).

A helical membrane pass occupies residues Thr-5 to Val-25. Positions Lys-87–Glu-117 are disordered. A KH domain is found at Thr-211 to Leu-274. Residues Val-337–Ala-430 enclose the HD domain.

Belongs to the RNase Y family.

The protein resides in the cell membrane. Its function is as follows. Endoribonuclease that initiates mRNA decay. This is Ribonuclease Y from Bacillus mycoides (strain KBAB4) (Bacillus weihenstephanensis).